Reading from the N-terminus, the 280-residue chain is Putative transcription factor kapC (280 aa).

Positions 1-102 (MQPALAPHPS…GKRPLSTSKR (102 aa)) are disordered. Over residues 39-49 (PQPPAPQPPHM) the composition is skewed to pro residues. Residues 79-89 (TQPDVTGQETP) show a composition bias toward polar residues. Positions 96–159 (PLSTSKRAAQ…EYIINLQSRL (64 aa)) constitute a bZIP domain. Residues 97–120 (LSTSKRAAQNRAAQRAFRQRKEAH) are basic motif. The segment at 124 to 155 (LEGKVKAYENMGEAIKALQAENYQLREYIINL) is leucine-zipper. The interval 169–280 (LPGNIDLSQP…EQTHGLPLIS (112 aa)) is disordered. Residues 197-211 (APPPTAPQQPQPPHA) are compositionally biased toward pro residues.

It belongs to the bZIP family.

Its subcellular location is the nucleus. In terms of biological role, putative transcription factor. The protein is Putative transcription factor kapC (kapC) of Neosartorya fischeri (strain ATCC 1020 / DSM 3700 / CBS 544.65 / FGSC A1164 / JCM 1740 / NRRL 181 / WB 181) (Aspergillus fischerianus).